We begin with the raw amino-acid sequence, 89 residues long: Neurotoxin beta-KTx 12 (89 aa).

The signal sequence occupies residues Met1 to Ala20. Positions Gly21–Asp39 are excised as a propeptide. Positions Glu53 to Lys89 constitute a BetaSPN-type CS-alpha/beta domain. Cystine bridges form between Cys56/Cys76, Cys63/Cys81, and Cys67/Cys83.

It belongs to the long chain scorpion toxin family. Class 2 subfamily. As to expression, expressed by the venom gland.

Its subcellular location is the secreted. In terms of biological role, inhibits voltage-gated potassium channel. The sequence is that of Neurotoxin beta-KTx 12 from Lychas mucronatus (Chinese swimming scorpion).